Reading from the N-terminus, the 295-residue chain is Ethanolamine ammonia-lyase small subunit (295 aa).

The adenosylcob(III)alamin site is built by Val-207, Glu-228, and Cys-258.

The protein belongs to the EutC family. As to quaternary structure, the basic unit is a heterodimer which dimerizes to form tetramers. The heterotetramers trimerize; 6 large subunits form a core ring with 6 small subunits projecting outwards. The cofactor is adenosylcob(III)alamin.

It is found in the bacterial microcompartment. It carries out the reaction ethanolamine = acetaldehyde + NH4(+). Its pathway is amine and polyamine degradation; ethanolamine degradation. Catalyzes the deamination of various vicinal amino-alcohols to oxo compounds. Allows this organism to utilize ethanolamine as the sole source of nitrogen and carbon in the presence of external vitamin B12. This Escherichia coli (strain SE11) protein is Ethanolamine ammonia-lyase small subunit.